The chain runs to 76 residues: UPF0291 protein BCE_1981 (76 aa).

It belongs to the UPF0291 family.

Its subcellular location is the cytoplasm. The polypeptide is UPF0291 protein BCE_1981 (Bacillus cereus (strain ATCC 10987 / NRS 248)).